The primary structure comprises 579 residues: Thiol:disulfide interchange protein DsbD (579 aa).

The first 16 residues, 1–16 (MKKLFLFFTLIFTAFA), serve as a signal peptide directing secretion. 2 cysteine pairs are disulfide-bonded: Cys124–Cys129 and Cys193–Cys315. 8 consecutive transmembrane segments (helical) span residues 178–198 (IFGF…LPML), 230–250 (LTYT…QIAL), 254–274 (YVMI…FGLF), 296–316 (GAFG…SPCT), 337–357 (AATL…ITLF), 376–396 (FGFV…PEVW), 397–417 (EPRL…LQMS), and 420–440 (GFGY…VQPL). Positions 449–579 (TTTQSAVENM…AFSNWLKALH (131 aa)) constitute a Thioredoxin domain. Cys495 and Cys498 form a disulfide bridge.

Belongs to the thioredoxin family. DsbD subfamily.

The protein resides in the cell inner membrane. The enzyme catalyses [protein]-dithiol + NAD(+) = [protein]-disulfide + NADH + H(+). It catalyses the reaction [protein]-dithiol + NADP(+) = [protein]-disulfide + NADPH + H(+). In terms of biological role, required to facilitate the formation of correct disulfide bonds in some periplasmic proteins and for the assembly of the periplasmic c-type cytochromes. Acts by transferring electrons from cytoplasmic thioredoxin to the periplasm. This transfer involves a cascade of disulfide bond formation and reduction steps. This chain is Thiol:disulfide interchange protein DsbD, found in Haemophilus influenzae (strain 86-028NP).